The sequence spans 211 residues: FMN-dependent NADH:quinone oxidoreductase (211 aa).

FMN is bound by residues 17–19 (SYS) and 99–102 (MWNF).

It belongs to the azoreductase type 1 family. In terms of assembly, homodimer. FMN is required as a cofactor.

It catalyses the reaction 2 a quinone + NADH + H(+) = 2 a 1,4-benzosemiquinone + NAD(+). It carries out the reaction N,N-dimethyl-1,4-phenylenediamine + anthranilate + 2 NAD(+) = 2-(4-dimethylaminophenyl)diazenylbenzoate + 2 NADH + 2 H(+). In terms of biological role, quinone reductase that provides resistance to thiol-specific stress caused by electrophilic quinones. Its function is as follows. Also exhibits azoreductase activity. Catalyzes the reductive cleavage of the azo bond in aromatic azo compounds to the corresponding amines. The chain is FMN-dependent NADH:quinone oxidoreductase from Exiguobacterium sp. (strain ATCC BAA-1283 / AT1b).